The following is a 259-amino-acid chain: Caffeoyl-CoA O-methyltransferase (259 aa).

A substrate-binding site is contributed by lysine 33. S-adenosyl-L-methionine contacts are provided by residues threonine 75, glutamate 97, 99-100 (GV), serine 105, aspartate 123, and alanine 152. Residue aspartate 175 coordinates substrate. Aspartate 175 is an a divalent metal cation binding site. Aspartate 177 contacts S-adenosyl-L-methionine. Positions 201 and 202 each coordinate a divalent metal cation. Asparagine 206 contacts substrate.

The protein belongs to the class I-like SAM-binding methyltransferase superfamily. Cation-dependent O-methyltransferase family. CCoAMT subfamily. A divalent metal cation is required as a cofactor.

It carries out the reaction (E)-caffeoyl-CoA + S-adenosyl-L-methionine = (E)-feruloyl-CoA + S-adenosyl-L-homocysteine + H(+). It participates in aromatic compound metabolism; phenylpropanoid biosynthesis. Methylates caffeoyl-CoA to feruloyl-CoA and 5-hydroxyferuloyl-CoA to sinapoyl-CoA. Plays a role in the synthesis of feruloylated polysaccharides. Involved in the reinforcement of the plant cell wall. Also involved in the responding to wounding or pathogen challenge by the increased formation of cell wall-bound ferulic acid polymers. The polypeptide is Caffeoyl-CoA O-methyltransferase (CCOAOMT) (Pinus taeda (Loblolly pine)).